Reading from the N-terminus, the 400-residue chain is Inosine-5'-monophosphate dehydrogenase (400 aa).

Positions 96–116 (KNESTPDQNLDKESTDGKDTK) are enriched in basic and acidic residues. The segment at 96-125 (KNESTPDQNLDKESTDGKDTKSNNNIDAYS) is disordered. NAD(+)-binding positions include Asp163 and 212–214 (GIG). Gly214 and Gly216 together coordinate K(+). Residue Ser217 participates in IMP binding. Cys219 lines the K(+) pocket. The Thioimidate intermediate role is filled by Cys219. IMP contacts are provided by residues 252–254 (DGG), 275–276 (GS), and 299–303 (YRGMG). Arg315 acts as the Proton acceptor in catalysis. An IMP-binding site is contributed by Glu329. Positions 383, 384, and 385 each coordinate K(+).

Belongs to the IMPDH/GMPR family. In terms of assembly, homotetramer. The cofactor is K(+).

Its subcellular location is the cytoplasm. The enzyme catalyses IMP + NAD(+) + H2O = XMP + NADH + H(+). Its pathway is purine metabolism; XMP biosynthesis via de novo pathway; XMP from IMP: step 1/1. Mycophenolic acid (MPA) is a non-competitive inhibitor that prevents formation of the closed enzyme conformation by binding to the same site as the amobile flap. In contrast, mizoribine monophosphate (MZP) is a competitive inhibitor that induces the closed conformation. MPA is a potent inhibitor of mammalian IMPDHs but a poor inhibitor of the bacterial enzymes. MZP is a more potent inhibitor of bacterial IMPDH. Resistant to mycophenolic acid (MPA) inhibition. Catalyzes the conversion of inosine 5'-phosphate (IMP) to xanthosine 5'-phosphate (XMP), the first committed and rate-limiting step in the de novo synthesis of guanine nucleotides, and therefore plays an important role in the regulation of cell growth. The sequence is that of Inosine-5'-monophosphate dehydrogenase from Cryptosporidium parvum.